Here is a 320-residue protein sequence, read N- to C-terminus: Mas-related G-protein coupled receptor member D (320 aa).

Topologically, residues 1 to 33 are extracellular; it reads MNQTLNSSGTAELALNHSRGSVVHAACLVLSSL. 3 N-linked (GlcNAc...) asparagine glycosylation sites follow: N2, N6, and N16. A helical transmembrane segment spans residues 34-54; it reads AMFTCLCGMAGNSMVIWLLGF. Over 55–62 the chain is Cytoplasmic; that stretch reads RMRRTPFS. A helical membrane pass occupies residues 63-83; that stretch reads IYILNLAAADLLFVFCMAAML. Residues 84–112 lie on the Extracellular side of the membrane; that stretch reads SLETQPLVSTTDKVHELMKRLKYFAYTVG. Residues 113 to 133 traverse the membrane as a helical segment; it reads LSLLTAISTQRCLSVLFPIWF. At 134–142 the chain is on the cytoplasmic side; it reads KCHRPRHLS. A helical membrane pass occupies residues 143–163; it reads AWVCALLWMLCLLTNGLTSCF. The Extracellular segment spans residues 164–182; that stretch reads CSKFLKFNKDQCFRVDMVQ. The chain crosses the membrane as a helical span at residues 183–203; sequence AALIMGVLTPVMTLSSLTLFV. Residues 204–218 lie on the Cytoplasmic side of the membrane; sequence RVRRSSQQWRRQPTR. A helical transmembrane segment spans residues 219-239; that stretch reads LFVVVLASVLVFLICSLPLGF. Topologically, residues 240–257 are extracellular; it reads YWFVLYWLNLPPDTKVLY. Residues 258 to 280 form a helical membrane-spanning segment; that stretch reads FNLSRLSSSMSSSANPLIYFLVG. Topologically, residues 281–320 are cytoplasmic; it reads SRRSRRLQGSLGTVLQRALREEPELEGGETPTTGTNEMGA. A disordered region spans residues 301 to 320; sequence EEPELEGGETPTTGTNEMGA. Positions 308-320 are enriched in low complexity; sequence GETPTTGTNEMGA.

This sequence belongs to the G-protein coupled receptor 1 family. Mas subfamily. In terms of tissue distribution, co-expressed in the small diameter neurons with P2X3 and VR1 in dorsal root ganglia.

The protein resides in the cell membrane. Its function is as follows. May regulate nociceptor function and/or development, including the sensation or modulation of pain. Functions as a specific membrane receptor for beta-alanine. The receptor couples with G-protein G(q) and G(i). This chain is Mas-related G-protein coupled receptor member D (MRGPRD), found in Macaca fascicularis (Crab-eating macaque).